The chain runs to 152 residues: Small ribosomal subunit protein uS19 (152 aa).

Belongs to the universal ribosomal protein uS19 family.

Its function is as follows. Protein S19 forms a complex with S13 that binds strongly to the 16S ribosomal RNA. The chain is Small ribosomal subunit protein uS19 (rps19) from Methanocaldococcus jannaschii (strain ATCC 43067 / DSM 2661 / JAL-1 / JCM 10045 / NBRC 100440) (Methanococcus jannaschii).